The following is a 202-amino-acid chain: Small ribosomal subunit protein uS5 (202 aa).

Residues 50-113 enclose the S5 DRBM domain; the sequence is LKQELLNLNL…REAKLNITPV (64 aa).

This sequence belongs to the universal ribosomal protein uS5 family. As to quaternary structure, part of the 30S ribosomal subunit. Contacts protein S4.

In terms of biological role, with S4 and S12 plays an important role in translational accuracy. This chain is Small ribosomal subunit protein uS5, found in Pyrobaculum calidifontis (strain DSM 21063 / JCM 11548 / VA1).